Reading from the N-terminus, the 510-residue chain is NAD(P)H-quinone oxidoreductase subunit 2 A, chloroplastic (510 aa).

Helical transmembrane passes span 31-51, 59-79, 99-119, 124-144, 149-169, 183-203, 229-249, 295-315, 323-343, 354-374, 395-415, and 418-438; these read FIFP…IDLT, WFYF…LFRW, IFQF…VEYI, MAIT…MFLC, LITI…LSGY, YLLM…WLYG, ISIA…PAPF, WHLL…LLAI, MLAY…IVGD, YMLF…LFGL, ALSL…AGFF, and LYLF…IGLL.

The protein belongs to the complex I subunit 2 family. As to quaternary structure, NDH is composed of at least 16 different subunits, 5 of which are encoded in the nucleus.

It localises to the plastid. It is found in the chloroplast thylakoid membrane. The catalysed reaction is a plastoquinone + NADH + (n+1) H(+)(in) = a plastoquinol + NAD(+) + n H(+)(out). It catalyses the reaction a plastoquinone + NADPH + (n+1) H(+)(in) = a plastoquinol + NADP(+) + n H(+)(out). NDH shuttles electrons from NAD(P)H:plastoquinone, via FMN and iron-sulfur (Fe-S) centers, to quinones in the photosynthetic chain and possibly in a chloroplast respiratory chain. The immediate electron acceptor for the enzyme in this species is believed to be plastoquinone. Couples the redox reaction to proton translocation, and thus conserves the redox energy in a proton gradient. The protein is NAD(P)H-quinone oxidoreductase subunit 2 A, chloroplastic of Oryza nivara (Indian wild rice).